Consider the following 226-residue polypeptide: MNPIVINRLQRKLGYTFRQHDLLMQALTHRSASSKHNERLEFLGDSILSFVIANALYHRFPRVDEGDMSRMRATLVRGNTLAEMAREFDLGECLRLGPGELKSGGFRRESILADTVEALIGGIFLDSDIQTIERLILDWYRSRLEEISPGDKQKDPKTRLQEFLQGRHLPLPSYLVVQVRGEAHDQEFTIHCQVSGLSAPVVGVGSSRRKAEQAAAEQALKQLELE.

Positions 6 to 128 (INRLQRKLGY…LIGGIFLDSD (123 aa)) constitute an RNase III domain. Residue Glu-41 coordinates Mg(2+). The active site involves Asp-45. Asp-114 and Glu-117 together coordinate Mg(2+). Glu-117 is a catalytic residue. One can recognise a DRBM domain in the interval 155 to 225 (DPKTRLQEFL…AEQALKQLEL (71 aa)).

It belongs to the ribonuclease III family. As to quaternary structure, homodimer. Mg(2+) is required as a cofactor.

The protein localises to the cytoplasm. It catalyses the reaction Endonucleolytic cleavage to 5'-phosphomonoester.. Functionally, digests double-stranded RNA. Involved in the processing of primary rRNA transcript to yield the immediate precursors to the large and small rRNAs (23S and 16S). Processes some mRNAs, and tRNAs when they are encoded in the rRNA operon. Processes pre-crRNA and tracrRNA of type II CRISPR loci if present in the organism. In Edwardsiella ictaluri (strain 93-146), this protein is Ribonuclease 3.